A 1025-amino-acid chain; its full sequence is Interferon-induced helicase C domain-containing protein 1 (1025 aa).

CARD domains lie at 7-97 (AEDS…YVKP) and 110-190 (AHDE…QTGN). Glycyl lysine isopeptide (Lys-Gly) (interchain with G-Cter in ISG15) cross-links involve residues lysine 23 and lysine 43. Residues 273-297 (SLGHNSNMGRDSGTMGSDSDESVIQ) are disordered. The segment covering 275–297 (GHNSNMGRDSGTMGSDSDESVIQ) has biased composition (polar residues). A phosphoserine mark is found at serine 289, serine 291, and serine 302. The Helicase ATP-binding domain maps to 317-510 (AQPALDGKNI…SEAEKHILNI (194 aa)). Serine 645 and serine 648 each carry phosphoserine. The Helicase C-terminal domain occupies 700 to 872 (KLIKLRNTIL…NMKPEEYAHK (173 aa)). Serine 828 bears the Phosphoserine; by RIOK3 mark. The RLR CTR domain maps to 893–1020 (AKQYNDNPSL…PDLDYSEYCL (128 aa)). Residues cysteine 907, cysteine 910, cysteine 962, and cysteine 964 each contribute to the Zn(2+) site.

This sequence belongs to the helicase family. RLR subfamily. As to quaternary structure, monomer in the absence of ligands and homodimerizes in the presence of dsRNA ligands. Can assemble into helical or linear polymeric filaments on long dsRNA. Interacts with MAVS/IPS1. Interacts (via the CARD domains) with TKFC, the interaction is inhibited by viral infection. Interacts with PCBP2. Interacts with NLRC5. Interacts with PIAS2-beta. Interacts with DDX60. Interacts with ANKRD17. Interacts with IKBKE. Interacts with ATG5 and ATG12, either as ATG5 and ATG12 monomers or as ATG12-ATG5 conjugates. Interacts with ZCCHC3; leading to activate IFIH1/MDA5. Interacts with RNF123. Interacts with DDX3X. Interacts with NOD1; this interaction promotes transcription of antiviral genes and inhibition of viral replication. Interacts with ECSIT; this interaction bridges IFIH1 to the MAVS complex at the mitochondrion. During apoptosis, processed into 3 cleavage products. The helicase-containing fragment, once liberated from the CARD domains, translocate from the cytoplasm to the nucleus. The processed protein significantly sensitizes cells to DNA degradation. Post-translationally, sumoylated. Sumoylation positively regulates its role in type I interferon induction and is enhanced by PIAS2-beta. In terms of processing, ubiquitinated by RNF125, leading to its degradation by the proteasome. USP17/UPS17L2-dependent deubiquitination positively regulates the receptor. Ubiquitinated by TRIM25 via 'Lys-63'-linked ubiquitination, promoting activation of IFIH1/MDA5. Ubiquitinated by TRIM40 via 'Lys-48'-linked ubiquitination; leading to proteasomal degradation. Ubiquitinated by TRIM65 via 'Lys-63'-linked ubiquitination, promoting activation of IFIH1/MDA5. ISGylated by ISG15. ISGylation increases upon infection with viruses. ISGylation at Lys-23 and Lys-43 is dependent of dephosphorylation, regulates mitochondrial translocation and oligomerization. Essential for IFIH1/MDA5-mediated cytokine responses and restriction of virus replication. Post-translationally, phosphorylated. Dephosphorylated by phsophatases PP1; dephosphorylation precedes and is required for ISGylation. As to expression, expression is prominent in lung, liver, kidney, heart and spleen (at protein level). Widely expressed at low level.

Its subcellular location is the cytoplasm. The protein resides in the nucleus. The protein localises to the mitochondrion. It catalyses the reaction ATP + H2O = ADP + phosphate + H(+). Innate immune receptor which acts as a cytoplasmic sensor of viral nucleic acids and plays a major role in sensing viral infection and in the activation of a cascade of antiviral responses including the induction of type I interferons and pro-inflammatory cytokines. Its ligands include mRNA lacking 2'-O-methylation at their 5' cap and long-dsRNA (&gt;1 kb in length). Upon ligand binding it associates with mitochondria antiviral signaling protein (MAVS/IPS1) which activates the IKK-related kinases: TBK1 and IKBKE which phosphorylate interferon regulatory factors: IRF3 and IRF7 which in turn activate transcription of antiviral immunological genes, including interferons (IFNs); IFN-alpha and IFN-beta. Responsible for detecting the Picornaviridae family members such as encephalomyocarditis virus (EMCV), mengo encephalomyocarditis virus (ENMG), and theiler's murine encephalomyelitis virus (TMEV). Can also detect other viruses such as dengue virus (DENV), west Nile virus (WNV), and reovirus. Also involved in antiviral signaling in response to viruses containing a dsDNA genome, such as vaccinia virus. Plays an important role in amplifying innate immune signaling through recognition of RNA metabolites that are produced during virus infection by ribonuclease L (RNase L). May play an important role in enhancing natural killer cell function and may be involved in growth inhibition and apoptosis in several tumor cell lines. In Mus musculus (Mouse), this protein is Interferon-induced helicase C domain-containing protein 1.